The primary structure comprises 282 residues: Lipoyl synthase (282 aa).

The [4Fe-4S] cluster site is built by cysteine 37, cysteine 42, cysteine 48, cysteine 63, cysteine 67, cysteine 70, and serine 275. Positions 49 to 264 (WSRGTATFMI…RLVGIEKGFR (216 aa)) constitute a Radical SAM core domain.

The protein belongs to the radical SAM superfamily. Lipoyl synthase family. Requires [4Fe-4S] cluster as cofactor.

The protein localises to the cytoplasm. The catalysed reaction is [[Fe-S] cluster scaffold protein carrying a second [4Fe-4S](2+) cluster] + N(6)-octanoyl-L-lysyl-[protein] + 2 oxidized [2Fe-2S]-[ferredoxin] + 2 S-adenosyl-L-methionine + 4 H(+) = [[Fe-S] cluster scaffold protein] + N(6)-[(R)-dihydrolipoyl]-L-lysyl-[protein] + 4 Fe(3+) + 2 hydrogen sulfide + 2 5'-deoxyadenosine + 2 L-methionine + 2 reduced [2Fe-2S]-[ferredoxin]. It functions in the pathway protein modification; protein lipoylation via endogenous pathway; protein N(6)-(lipoyl)lysine from octanoyl-[acyl-carrier-protein]: step 2/2. Catalyzes the radical-mediated insertion of two sulfur atoms into the C-6 and C-8 positions of the octanoyl moiety bound to the lipoyl domains of lipoate-dependent enzymes, thereby converting the octanoylated domains into lipoylated derivatives. This chain is Lipoyl synthase, found in Porphyromonas gingivalis (strain ATCC 33277 / DSM 20709 / CIP 103683 / JCM 12257 / NCTC 11834 / 2561).